A 381-amino-acid chain; its full sequence is Probable 26S proteasome regulatory subunit rpn9 (381 aa).

The PCI domain occupies glutamine 177–serine 343.

The protein belongs to the proteasome subunit S11 family.

In terms of biological role, acts as a regulatory subunit of the 26S proteasome which is involved in the ATP-dependent degradation of ubiquitinated proteins. The protein is Probable 26S proteasome regulatory subunit rpn9 (rpn9) of Schizosaccharomyces pombe (strain 972 / ATCC 24843) (Fission yeast).